A 330-amino-acid chain; its full sequence is ADP-L-glycero-D-manno-heptose-6-epimerase (330 aa).

NADP(+)-binding positions include 11–12 (FI), 32–33 (DN), lysine 39, lysine 54, 75–79 (EGACS), and asparagine 92. Tyrosine 139 functions as the Proton acceptor in the catalytic mechanism. Lysine 143 provides a ligand contact to NADP(+). Asparagine 168 contributes to the substrate binding site. Positions 169 and 177 each coordinate NADP(+). Residue lysine 177 is the Proton acceptor of the active site. Substrate contacts are provided by residues arginine 179, histidine 186, 200–203 (FGEY), arginine 213, and tyrosine 292.

The protein belongs to the NAD(P)-dependent epimerase/dehydratase family. HldD subfamily. In terms of assembly, homopentamer. Requires NADP(+) as cofactor.

It catalyses the reaction ADP-D-glycero-beta-D-manno-heptose = ADP-L-glycero-beta-D-manno-heptose. It functions in the pathway nucleotide-sugar biosynthesis; ADP-L-glycero-beta-D-manno-heptose biosynthesis; ADP-L-glycero-beta-D-manno-heptose from D-glycero-beta-D-manno-heptose 7-phosphate: step 4/4. In terms of biological role, catalyzes the interconversion between ADP-D-glycero-beta-D-manno-heptose and ADP-L-glycero-beta-D-manno-heptose via an epimerization at carbon 6 of the heptose. The polypeptide is ADP-L-glycero-D-manno-heptose-6-epimerase (Paraburkholderia xenovorans (strain LB400)).